A 385-amino-acid chain; its full sequence is Zinc finger protein B385R (385 aa).

2 C2H2-type zinc fingers span residues 166 to 190 (LQCPNCGCIQELMGTIFDETHFYNH) and 168 to 190 (CPNCGCIQELMGTIFDETHFYNH).

Belongs to the asfivirus B385R family.

The polypeptide is Zinc finger protein B385R (African swine fever virus (isolate Tick/Malawi/Lil 20-1/1983) (ASFV)).